The following is a 303-amino-acid chain: Mycothiol acetyltransferase (303 aa).

N-acetyltransferase domains are found at residues 4 to 141 (ITVR…RSLA) and 154 to 303 (IVLR…ANGA). E38 contributes to the 1D-myo-inositol 2-(L-cysteinylamino)-2-deoxy-alpha-D-glucopyranoside binding site. 80–82 (AAV) provides a ligand contact to acetyl-CoA. Residues E181, K223, and E234 each coordinate 1D-myo-inositol 2-(L-cysteinylamino)-2-deoxy-alpha-D-glucopyranoside. Residues 238–240 (VGI) and 245–251 (QGRGLGR) each bind acetyl-CoA. 1D-myo-inositol 2-(L-cysteinylamino)-2-deoxy-alpha-D-glucopyranoside is bound at residue Y272. Residue 277–282 (NTAAVN) participates in acetyl-CoA binding.

This sequence belongs to the acetyltransferase family. MshD subfamily. As to quaternary structure, monomer.

The enzyme catalyses 1D-myo-inositol 2-(L-cysteinylamino)-2-deoxy-alpha-D-glucopyranoside + acetyl-CoA = mycothiol + CoA + H(+). Functionally, catalyzes the transfer of acetyl from acetyl-CoA to desacetylmycothiol (Cys-GlcN-Ins) to form mycothiol. This chain is Mycothiol acetyltransferase, found in Nocardia farcinica (strain IFM 10152).